Here is a 199-residue protein sequence, read N- to C-terminus: Peroxynitrite isomerase (199 aa).

The short motif at 20 to 26 (GVWEGTG) is the GXWXGXG element. Heme b is bound at residue His-190.

It belongs to the nitrobindin family. As to quaternary structure, homodimer. Requires heme b as cofactor.

The enzyme catalyses peroxynitrite = nitrate. It participates in nitrogen metabolism. In terms of biological role, heme-binding protein able to scavenge peroxynitrite and to protect free L-tyrosine against peroxynitrite-mediated nitration, by acting as a peroxynitrite isomerase that converts peroxynitrite to nitrate. Therefore, this protein likely plays a role in peroxynitrite sensing and in the detoxification of reactive nitrogen and oxygen species (RNS and ROS, respectively). Is able to bind nitric oxide (NO) in vitro, but may act as a sensor of peroxynitrite levels in vivo. In Clavibacter michiganensis subsp. michiganensis (strain NCPPB 382), this protein is Peroxynitrite isomerase.